We begin with the raw amino-acid sequence, 106 residues long: Large ribosomal subunit protein bL21 (106 aa).

The protein belongs to the bacterial ribosomal protein bL21 family. In terms of assembly, part of the 50S ribosomal subunit. Contacts protein L20.

In terms of biological role, this protein binds to 23S rRNA in the presence of protein L20. The protein is Large ribosomal subunit protein bL21 of Xylella fastidiosa (strain Temecula1 / ATCC 700964).